We begin with the raw amino-acid sequence, 1549 residues long: FERM and PDZ domain-containing protein 1 (1549 aa).

The region spanning 57–135 (TVTLDKDVLL…ALSITVVRCT (79 aa)) is the PDZ domain. The FERM domain maps to 181-496 (NVLKVYLENG…GYYRLFVDPA (316 aa)). Disordered regions lie at residues 554 to 618 (AREE…DDLD), 717 to 738 (SHLS…PPQW), 775 to 834 (YDAA…YAKS), 913 to 1046 (STNP…RSEI), 1097 to 1174 (SLDS…EAQE), 1231 to 1257 (LSPC…DDSP), and 1321 to 1347 (PETE…AGSQ). Residues 717 to 730 (SHLSDSGSESTASR) show a composition bias toward polar residues. The important for interaction with GPSM2 stretch occupies residues 924–931 (EPETMETK). Residues 950–961 (PSNTENPVTTDG) show a composition bias toward polar residues. Residues 962–980 (SSASIPHSPHHSNPGSSSP) are compositionally biased toward low complexity. Basic and acidic residues predominate over residues 1117–1130 (SGKDLGDSKGDRLD).

As to quaternary structure, interacts with GPSM1. Interacts with GPSM2.

Its subcellular location is the cytoplasm. It localises to the cytosol. The protein localises to the cell membrane. Stabilizes membrane-bound GPSM1, and thereby promotes its interaction with GNAI1. This Mus musculus (Mouse) protein is FERM and PDZ domain-containing protein 1 (Frmpd1).